The sequence spans 296 residues: MFIIAALYHFTRFENPAALKPALLELCKAQGVTGTLLLAPEGVNGTITGSRAGIDAVLAHLKALPGCDGLEWKEAQSERANFGKMKVRIKREIVTMKQPDVDPRAKTGHYVTPADWNALIAQPDVAVIDTRNDYEVEIGTFEGAIDPKTRSFGEFPAWWEANKHRFHNKKIAMFCTGGIRCEKSTNYLLGQGVEDVFHLKGGILQYLEDIPQDQSTWNGACFVFDNRVSVGHGLQEGPHLLCHGCRQPILPADKKRAEYEEGVSCHKCFDQTTSEDKARFRERQKQIELARKRARA.

In terms of domain architecture, Rhodanese spans 121-215; the sequence is AQPDVAVIDT…YLEDIPQDQS (95 aa). C175 functions as the Cysteine persulfide intermediate in the catalytic mechanism.

It belongs to the TrhO family.

The enzyme catalyses uridine(34) in tRNA + AH2 + O2 = 5-hydroxyuridine(34) in tRNA + A + H2O. Its function is as follows. Catalyzes oxygen-dependent 5-hydroxyuridine (ho5U) modification at position 34 in tRNAs. The chain is tRNA uridine(34) hydroxylase from Roseobacter denitrificans (strain ATCC 33942 / OCh 114) (Erythrobacter sp. (strain OCh 114)).